The sequence spans 442 residues: HTH-type transcriptional regulator NorG (442 aa).

Residues 2 to 46 (KIPPQRQLAIQYNVNRVTIIKSIELLEAEGFIYTKVGSGTYVNDY) form the HTH gntR-type domain. Positions 6 to 25 (QRQLAIQYNVNRVTIIKSIE) form a DNA-binding region, H-T-H motif. Lys288 is subject to N6-(pyridoxal phosphate)lysine.

The protein in the C-terminal section; belongs to the class-I pyridoxal-phosphate-dependent aminotransferase family. Pyridoxal 5'-phosphate serves as cofactor.

Its function is as follows. Positively regulates the expression of the NorB efflux pump and negatively regulates the expression of the AbcA efflux pump. Binds specifically to the promoters of norA, norB and norC and abcA genes. Could also have an aminotransferase activity. This is HTH-type transcriptional regulator NorG (norG) from Staphylococcus aureus (strain Mu50 / ATCC 700699).